The sequence spans 310 residues: Junctional adhesion molecule C (310 aa).

Positions 1-31 are cleaved as a signal peptide; sequence MALRRPPRLRLCARLPDFFLLLLFRGCLIGA. The Extracellular portion of the chain corresponds to 32–241; the sequence is VNLKSSNRTP…EQEMEVYDLN (210 aa). In terms of domain architecture, Ig-like V-type spans 35-127; the sequence is KSSNRTPVVQ…VARNDRKEID (93 aa). Cystine bridges form between cysteine 53–cysteine 115 and cysteine 160–cysteine 219. Asparagine 104 and asparagine 192 each carry an N-linked (GlcNAc...) asparagine glycan. Residues 139-236 enclose the Ig-like C2-type domain; that stretch reads PVTPVCRVPK…SARCEEQEME (98 aa). Residues 242-262 form a helical membrane-spanning segment; it reads IGGIIGGVLVVLAVLALITLG. Topologically, residues 263–310 are cytoplasmic; it reads ICCAYRRGYFINNKQDGESYKNPGKPDGVNYIRTDEEGDFRHKSSFVI. S-palmitoyl cysteine attachment occurs at residues cysteine 264 and cysteine 265.

Belongs to the immunoglobulin superfamily. In terms of assembly, interacts with ITGAM. Interacts with GORASP2. In terms of processing, proteolytically cleaved from endothelial cells surface into a soluble form by ADAM10 and ADAM17; the release of soluble JAM3 is increased by pro-inflammatory factors. Post-translationally, S-palmitoylated by ZDHHC7. S-palmitoylation promotes expression at tight junctions. Detected on round and elongated spermatids (at protein level). Highest expression in placenta, brain and kidney. Significant expression is detected on platelets. Expressed in intestinal mucosa cells. Expressed in the vascular endothelium. Found in serum (at protein level). Also detected in the synovial fluid of patients with rheumatoid arthritis, psoriatic arthritis or ostearthritis (at protein level).

Its subcellular location is the cell membrane. It is found in the cell junction. The protein resides in the desmosome. It localises to the tight junction. The protein localises to the secreted. Functionally, junctional adhesion protein that mediates heterotypic cell-cell interactions with its cognate receptor JAM2 to regulate different cellular processes. Plays a role in homing and mobilization of hematopoietic stem and progenitor cells within the bone marrow. At the surface of bone marrow stromal cells, it contributes to the retention of the hematopoietic stem and progenitor cells expressing JAM3. Plays a central role in leukocytes extravasation by facilitating transmigration through the endothelium. Plays a role in spermatogenesis where JAM2 and JAM3, which are respectively expressed by Sertoli and germ cells, mediate an interaction between both cell types and play an essential role in the anchorage of germ cells onto Sertoli cells and the assembly of cell polarity complexes during spermatid differentiation. Also functions as a counter-receptor for ITGAM, mediating leukocyte-platelet interactions and is involved in the regulation of transepithelial migration of polymorphonuclear neutrophils (PMN). Plays a role in angiogenesis. Plays a role in the regulation of cell migration. During myogenesis, it is involved in myocyte fusion. Promotes chemotaxis of vascular endothelial cells and stimulates angiogenesis. This is Junctional adhesion molecule C (JAM3) from Homo sapiens (Human).